The primary structure comprises 139 residues: MNHYSVLNLKDGKTYTDDEIKEAYRKALLLFHPDKCKEKPSVVYTIDQVKEAYQVLSSEKDRQQYQIKQEEESSHYYSIVDLSEFEELDNGSYYYPCRCGDLGGYVVTEDDLENNRSVVPCMGCSLTIQVDYEIAESDS.

The 68-residue stretch at 2–69 (NHYSVLNLKD…KDRQQYQIKQ (68 aa)) folds into the J domain. The 58-residue stretch at 76 to 133 (YYSIVDLSEFEELDNGSYYYPCRCGDLGGYVVTEDDLENNRSVVPCMGCSLTIQVDYE) folds into the DPH-type MB domain. Cys-97, Cys-99, Cys-121, and Cys-124 together coordinate Zn(2+).

It belongs to the DPH4 family.

Its subcellular location is the cytoplasm. It localises to the nucleus. It functions in the pathway protein modification; peptidyl-diphthamide biosynthesis. Functionally, required for the first step of diphthamide biosynthesis, the transfer of 3-amino-3-carboxypropyl from S-adenosyl-L-methionine to a histidine residue. Diphthamide is a post-translational modification of histidine which occurs in elongation factor 2. This Schizosaccharomyces pombe (strain 972 / ATCC 24843) (Fission yeast) protein is Diphthamide biosynthesis protein 4 (dph4).